The sequence spans 321 residues: Aspartate carbamoyltransferase catalytic subunit (321 aa).

Residues arginine 64 and threonine 65 each coordinate carbamoyl phosphate. Lysine 92 provides a ligand contact to L-aspartate. The carbamoyl phosphate site is built by arginine 114, histidine 144, and glutamine 147. Positions 177 and 232 each coordinate L-aspartate. Glycine 273 and proline 274 together coordinate carbamoyl phosphate.

This sequence belongs to the aspartate/ornithine carbamoyltransferase superfamily. ATCase family. Heterododecamer (2C3:3R2) of six catalytic PyrB chains organized as two trimers (C3), and six regulatory PyrI chains organized as three dimers (R2).

It carries out the reaction carbamoyl phosphate + L-aspartate = N-carbamoyl-L-aspartate + phosphate + H(+). Its pathway is pyrimidine metabolism; UMP biosynthesis via de novo pathway; (S)-dihydroorotate from bicarbonate: step 2/3. Catalyzes the condensation of carbamoyl phosphate and aspartate to form carbamoyl aspartate and inorganic phosphate, the committed step in the de novo pyrimidine nucleotide biosynthesis pathway. The sequence is that of Aspartate carbamoyltransferase catalytic subunit from Alkalilimnicola ehrlichii (strain ATCC BAA-1101 / DSM 17681 / MLHE-1).